The primary structure comprises 270 residues: uncharacterized protein (270 aa).

Positions 1-22 (MGYIKRMALYMSVFLLIIFIVG) are cleaved as a signal peptide. A lipid anchor (N-palmitoyl cysteine) is attached at Cys-23. A lipid anchor (S-diacylglycerol cysteine) is attached at Cys-23.

It belongs to the staphylococcal tandem lipoprotein family.

It is found in the cell membrane. This is an uncharacterized protein from Staphylococcus aureus (strain COL).